An 89-amino-acid chain; its full sequence is LYR motif-containing protein 4 (89 aa).

This sequence belongs to the complex I LYR family.

Its subcellular location is the mitochondrion. The protein resides in the nucleus. Its pathway is cofactor biosynthesis; iron-sulfur cluster biosynthesis. Required for nuclear and mitochondrial iron-sulfur protein biosynthesis. This chain is LYR motif-containing protein 4 (lyrm4), found in Danio rerio (Zebrafish).